A 130-amino-acid polypeptide reads, in one-letter code: Small ribosomal subunit protein uS8 (130 aa).

The protein belongs to the universal ribosomal protein uS8 family. Part of the 30S ribosomal subunit.

Its function is as follows. One of the primary rRNA binding proteins, it binds directly to 16S rRNA central domain where it helps coordinate assembly of the platform of the 30S subunit. The chain is Small ribosomal subunit protein uS8 from Thermococcus onnurineus (strain NA1).